The primary structure comprises 223 residues: Sigma non-opioid intracellular receptor 1 (223 aa).

Over methionine 1–tryptophan 9 the chain is Lumenal. The interval glutamine 2–arginine 8 is targeting to endoplasmic reticulum-associated lipid droplets. The helical transmembrane segment at alanine 10 to leucine 30 threads the bilayer. At glycine 31 to proline 223 the chain is on the cytoplasmic side. The interval serine 99–leucine 106 is important for ligand-binding. Residues valine 177–proline 223 are C-terminal hydrophobic region.

This sequence belongs to the ERG2 family. As to quaternary structure, homotrimer. Forms a ternary complex with ANK2 and ITPR3. The complex is disrupted by agonists. Interacts with KCNA4. Interacts with KCNA2; cocaine consumption leads to increased interaction. Interacts with RNF112 in an oxidative stress-regulated manner. Widely expressed with higher expression in liver, colon, prostate, placenta, small intestine, heart and pancreas. Expressed in the retina by retinal pigment epithelial cells. Expressed in alpha-motor neurons.

It is found in the nucleus inner membrane. The protein resides in the nucleus outer membrane. It localises to the nucleus envelope. The protein localises to the cytoplasmic vesicle. Its subcellular location is the endoplasmic reticulum membrane. It is found in the membrane. The protein resides in the lipid droplet. It localises to the cell junction. The protein localises to the cell membrane. Its subcellular location is the cell projection. It is found in the growth cone. The protein resides in the postsynaptic density membrane. Its function is as follows. Functions in lipid transport from the endoplasmic reticulum and is involved in a wide array of cellular functions probably through regulation of the biogenesis of lipid microdomains at the plasma membrane. Involved in the regulation of different receptors it plays a role in BDNF signaling and EGF signaling. Also regulates ion channels like the potassium channel and could modulate neurotransmitter release. Plays a role in calcium signaling through modulation together with ANK2 of the ITP3R-dependent calcium efflux at the endoplasmic reticulum. Plays a role in several other cell functions including proliferation, survival and death. Originally identified for its ability to bind various psychoactive drugs it is involved in learning processes, memory and mood alteration. Necessary for proper mitochondrial axonal transport in motor neurons, in particular the retrograde movement of mitochondria. Plays a role in protecting cells against oxidative stress-induced cell death via its interaction with RNF112. In Homo sapiens (Human), this protein is Sigma non-opioid intracellular receptor 1 (SIGMAR1).